The chain runs to 447 residues: Tubulin beta-5 chain (447 aa).

Glutamine 11, glutamate 69, serine 138, glycine 142, threonine 143, glycine 144, asparagine 204, and asparagine 226 together coordinate GTP. Glutamate 69 contacts Mg(2+). Residues 424–447 are disordered; that stretch reads QYQDATAEEEGEFDEDEELDDAMG. Residues 429 to 447 show a composition bias toward acidic residues; it reads TAEEEGEFDEDEELDDAMG.

The protein belongs to the tubulin family. Dimer of alpha and beta chains. A typical microtubule is a hollow water-filled tube with an outer diameter of 25 nm and an inner diameter of 15 nM. Alpha-beta heterodimers associate head-to-tail to form protofilaments running lengthwise along the microtubule wall with the beta-tubulin subunit facing the microtubule plus end conferring a structural polarity. Microtubules usually have 13 protofilaments but different protofilament numbers can be found in some organisms and specialized cells. Mg(2+) is required as a cofactor.

Its subcellular location is the cytoplasm. The protein resides in the cytoskeleton. Tubulin is the major constituent of microtubules, a cylinder consisting of laterally associated linear protofilaments composed of alpha- and beta-tubulin heterodimers. Microtubules grow by the addition of GTP-tubulin dimers to the microtubule end, where a stabilizing cap forms. Below the cap, tubulin dimers are in GDP-bound state, owing to GTPase activity of alpha-tubulin. The chain is Tubulin beta-5 chain (TUBB5) from Ectocarpus variabilis (Brown alga).